Consider the following 449-residue polypeptide: Bifunctional protein GlmU (449 aa).

Residues 1 to 231 (MVRNCLSIVL…FDNVIGINNC (231 aa)) form a pyrophosphorylase region. UDP-N-acetyl-alpha-D-glucosamine contacts are provided by residues 10–13 (LAAG), K24, Q77, and 82–83 (GT). Mg(2+) is bound at residue D107. Residues G143, E157, N172, and N229 each contribute to the UDP-N-acetyl-alpha-D-glucosamine site. N229 contributes to the Mg(2+) binding site. Residues 232-252 (FELFEADALWQKRKARDLMLS) are linker. The interval 253 to 449 (GVTILKPESV…AHLSKNKRNK (197 aa)) is N-acetyltransferase. The UDP-N-acetyl-alpha-D-glucosamine site is built by R318 and K336. H348 serves as the catalytic Proton acceptor. 2 residues coordinate UDP-N-acetyl-alpha-D-glucosamine: Y351 and N362. Acetyl-CoA contacts are provided by residues A365, 371-372 (NY), S390, S408, and R425.

It in the N-terminal section; belongs to the N-acetylglucosamine-1-phosphate uridyltransferase family. This sequence in the C-terminal section; belongs to the transferase hexapeptide repeat family. In terms of assembly, homotrimer. Mg(2+) is required as a cofactor.

It localises to the cytoplasm. The enzyme catalyses alpha-D-glucosamine 1-phosphate + acetyl-CoA = N-acetyl-alpha-D-glucosamine 1-phosphate + CoA + H(+). It carries out the reaction N-acetyl-alpha-D-glucosamine 1-phosphate + UTP + H(+) = UDP-N-acetyl-alpha-D-glucosamine + diphosphate. It functions in the pathway nucleotide-sugar biosynthesis; UDP-N-acetyl-alpha-D-glucosamine biosynthesis; N-acetyl-alpha-D-glucosamine 1-phosphate from alpha-D-glucosamine 6-phosphate (route II): step 2/2. The protein operates within nucleotide-sugar biosynthesis; UDP-N-acetyl-alpha-D-glucosamine biosynthesis; UDP-N-acetyl-alpha-D-glucosamine from N-acetyl-alpha-D-glucosamine 1-phosphate: step 1/1. Its pathway is bacterial outer membrane biogenesis; LPS lipid A biosynthesis. Catalyzes the last two sequential reactions in the de novo biosynthetic pathway for UDP-N-acetylglucosamine (UDP-GlcNAc). The C-terminal domain catalyzes the transfer of acetyl group from acetyl coenzyme A to glucosamine-1-phosphate (GlcN-1-P) to produce N-acetylglucosamine-1-phosphate (GlcNAc-1-P), which is converted into UDP-GlcNAc by the transfer of uridine 5-monophosphate (from uridine 5-triphosphate), a reaction catalyzed by the N-terminal domain. The sequence is that of Bifunctional protein GlmU from Bartonella bacilliformis (strain ATCC 35685 / KC583 / Herrer 020/F12,63).